We begin with the raw amino-acid sequence, 358 residues long: Alanine racemase (358 aa).

Lys35 acts as the Proton acceptor; specific for D-alanine in catalysis. Lys35 carries the post-translational modification N6-(pyridoxal phosphate)lysine. Residue Arg130 coordinates substrate. Tyr255 acts as the Proton acceptor; specific for L-alanine in catalysis. Residue Met303 coordinates substrate.

It belongs to the alanine racemase family. The cofactor is pyridoxal 5'-phosphate.

It catalyses the reaction L-alanine = D-alanine. It functions in the pathway amino-acid biosynthesis; D-alanine biosynthesis; D-alanine from L-alanine: step 1/1. Functionally, catalyzes the interconversion of L-alanine and D-alanine. May also act on other amino acids. The sequence is that of Alanine racemase (alr) from Shewanella baltica (strain OS185).